A 432-amino-acid polypeptide reads, in one-letter code: Adenylosuccinate synthetase (432 aa).

Residues 13–19 and 41–43 contribute to the GTP site; these read GDEGKGK and GHT. Asp-14 (proton acceptor) is an active-site residue. Mg(2+) contacts are provided by Asp-14 and Gly-41. Residues 14-17, 39-42, Thr-130, Arg-144, Gln-225, Thr-240, and Arg-304 contribute to the IMP site; these read DEGK and NAGH. The active-site Proton donor is the His-42. 300–306 is a substrate binding site; that stretch reads ATTGRRR. GTP is bound by residues Arg-306, 332-334, and 415-417; these read KLD and STG.

This sequence belongs to the adenylosuccinate synthetase family. Homodimer. The cofactor is Mg(2+).

The protein localises to the cytoplasm. The catalysed reaction is IMP + L-aspartate + GTP = N(6)-(1,2-dicarboxyethyl)-AMP + GDP + phosphate + 2 H(+). The protein operates within purine metabolism; AMP biosynthesis via de novo pathway; AMP from IMP: step 1/2. In terms of biological role, plays an important role in the de novo pathway of purine nucleotide biosynthesis. Catalyzes the first committed step in the biosynthesis of AMP from IMP. This Pectobacterium atrosepticum (strain SCRI 1043 / ATCC BAA-672) (Erwinia carotovora subsp. atroseptica) protein is Adenylosuccinate synthetase.